A 67-amino-acid polypeptide reads, in one-letter code: MARITVEDCLNQIPNRFKLTLAATYRARELVQGHAPRLDSKDKPTVTALREIASGLTGLEMLRKVPT.

It belongs to the RNA polymerase subunit omega family. As to quaternary structure, the RNAP catalytic core consists of 2 alpha, 1 beta, 1 beta' and 1 omega subunit. When a sigma factor is associated with the core the holoenzyme is formed, which can initiate transcription.

It catalyses the reaction RNA(n) + a ribonucleoside 5'-triphosphate = RNA(n+1) + diphosphate. Its function is as follows. Promotes RNA polymerase assembly. Latches the N- and C-terminal regions of the beta' subunit thereby facilitating its interaction with the beta and alpha subunits. The sequence is that of DNA-directed RNA polymerase subunit omega from Bordetella pertussis (strain Tohama I / ATCC BAA-589 / NCTC 13251).